The chain runs to 454 residues: MAYQMASLKIEMKEVVHVKPSKPTPSIVLPLSALEHRPYPDSIWPIVHVYQSPSNGQLDPAFVLKQALSKALVYYYPLAGKLVKQPNGKVAINCNNDGVPFLEAIANCELSSLNYLDDHDIRIAKQLVFDFHPQQDENEYPHPVSFKLTKFQCGGFTIGMSTSHIVCDGWGACKFFHAIVELASGKSEPFLKPVWERERLIGSITTQPMPNPMDETTAAVSPFLPATDVMYELFKVDKESIRRLKMSLMKEISCNESMEQSFTTFESLAAYVWRSRARALNLNNEGKTLLVFSVQVRQHMSPPLSDGYYGTAITEGQVVLTMKELNEKPLSDIVKLVKESKNVAFTGDFIKKTIDTLESNPENFNVEEGPGATLALSDWKHLGFMPNVDFGWKEPINMVPAPCNMFEYEGLCIFLSPSNHDPSMEGGVRVFISLPSVAMPKFKEEMEALKVITP.

The protein belongs to the plant acyltransferase family. As to quaternary structure, monomer.

The protein is Inactive tetrahydroanabasine acetyltransferase pauper allele of Lupinus albus (White lupine).